We begin with the raw amino-acid sequence, 884 residues long: Translation initiation factor IF-2 (884 aa).

Disordered regions lie at residues 42–62 (DVQK…QEEV) and 123–254 (EPKG…GGKK). Residues 194–212 (PAERREVVIPPKRKMEERA) show a composition bias toward basic and acidic residues. The segment covering 234 to 248 (EPETPAGGAPGAKKG) has biased composition (low complexity). Residues 384 to 553 (KRPPVVTIMG…LLQADVMDLK (170 aa)) enclose the tr-type G domain. Positions 393-400 (GHVDHGKT) are G1. Residue 393-400 (GHVDHGKT) participates in GTP binding. The G2 stretch occupies residues 418 to 422 (GITQH). The segment at 439–442 (DTPG) is G3. Residues 439–443 (DTPGH) and 493–496 (NKID) contribute to the GTP site. Residues 493–496 (NKID) form a G4 region. Positions 529–531 (SAK) are G5.

The protein belongs to the TRAFAC class translation factor GTPase superfamily. Classic translation factor GTPase family. IF-2 subfamily.

Its subcellular location is the cytoplasm. One of the essential components for the initiation of protein synthesis. Protects formylmethionyl-tRNA from spontaneous hydrolysis and promotes its binding to the 30S ribosomal subunits. Also involved in the hydrolysis of GTP during the formation of the 70S ribosomal complex. The polypeptide is Translation initiation factor IF-2 (Geobacter metallireducens (strain ATCC 53774 / DSM 7210 / GS-15)).